The following is a 378-amino-acid chain: Succinate--CoA ligase [GDP-forming] subunit beta (378 aa).

Residues 9–235 (KEILARYGVP…VEAEHPLEVE (227 aa)) enclose the ATP-grasp domain. GTP is bound by residues Lys-45, 52-54 (GRG), Val-94, and Glu-99. 2 residues coordinate Mg(2+): Asn-190 and Asp-204. Substrate contacts are provided by residues Asn-255 and 312-314 (GIT).

It belongs to the succinate/malate CoA ligase beta subunit family. In terms of assembly, heterotetramer of two alpha and two beta subunits. Mg(2+) is required as a cofactor.

It catalyses the reaction GTP + succinate + CoA = succinyl-CoA + GDP + phosphate. The enzyme catalyses succinate + ATP + CoA = succinyl-CoA + ADP + phosphate. It participates in carbohydrate metabolism; tricarboxylic acid cycle; succinate from succinyl-CoA (ligase route): step 1/1. In terms of biological role, succinyl-CoA synthetase functions in the citric acid cycle (TCA), coupling the hydrolysis of succinyl-CoA to the synthesis of either ATP or GTP and thus represents the only step of substrate-level phosphorylation in the TCA. The beta subunit provides nucleotide specificity of the enzyme and binds the substrate succinate, while the binding sites for coenzyme A and phosphate are found in the alpha subunit. Can use either ATP or GTP, but prefers GTP. The polypeptide is Succinate--CoA ligase [GDP-forming] subunit beta (Thermus thermophilus).